A 123-amino-acid polypeptide reads, in one-letter code: Large ribosomal subunit protein bL12 (123 aa).

It belongs to the bacterial ribosomal protein bL12 family. As to quaternary structure, homodimer. Part of the ribosomal stalk of the 50S ribosomal subunit. Forms a multimeric L10(L12)X complex, where L10 forms an elongated spine to which 2 to 4 L12 dimers bind in a sequential fashion. Binds GTP-bound translation factors.

Functionally, forms part of the ribosomal stalk which helps the ribosome interact with GTP-bound translation factors. Is thus essential for accurate translation. This is Large ribosomal subunit protein bL12 from Burkholderia vietnamiensis (strain G4 / LMG 22486) (Burkholderia cepacia (strain R1808)).